Consider the following 483-residue polypeptide: Aspartyl/glutamyl-tRNA(Asn/Gln) amidotransferase subunit B (483 aa).

Belongs to the GatB/GatE family. GatB subfamily. As to quaternary structure, heterotrimer of A, B and C subunits.

The enzyme catalyses L-glutamyl-tRNA(Gln) + L-glutamine + ATP + H2O = L-glutaminyl-tRNA(Gln) + L-glutamate + ADP + phosphate + H(+). It catalyses the reaction L-aspartyl-tRNA(Asn) + L-glutamine + ATP + H2O = L-asparaginyl-tRNA(Asn) + L-glutamate + ADP + phosphate + 2 H(+). In terms of biological role, allows the formation of correctly charged Asn-tRNA(Asn) or Gln-tRNA(Gln) through the transamidation of misacylated Asp-tRNA(Asn) or Glu-tRNA(Gln) in organisms which lack either or both of asparaginyl-tRNA or glutaminyl-tRNA synthetases. The reaction takes place in the presence of glutamine and ATP through an activated phospho-Asp-tRNA(Asn) or phospho-Glu-tRNA(Gln). The chain is Aspartyl/glutamyl-tRNA(Asn/Gln) amidotransferase subunit B from Rickettsia typhi (strain ATCC VR-144 / Wilmington).